The chain runs to 200 residues: Protein GrpE (200 aa).

This sequence belongs to the GrpE family. As to quaternary structure, homodimer.

It localises to the cytoplasm. Its function is as follows. Participates actively in the response to hyperosmotic and heat shock by preventing the aggregation of stress-denatured proteins, in association with DnaK and GrpE. It is the nucleotide exchange factor for DnaK and may function as a thermosensor. Unfolded proteins bind initially to DnaJ; upon interaction with the DnaJ-bound protein, DnaK hydrolyzes its bound ATP, resulting in the formation of a stable complex. GrpE releases ADP from DnaK; ATP binding to DnaK triggers the release of the substrate protein, thus completing the reaction cycle. Several rounds of ATP-dependent interactions between DnaJ, DnaK and GrpE are required for fully efficient folding. The polypeptide is Protein GrpE (Mycoplasma mycoides subsp. mycoides SC (strain CCUG 32753 / NCTC 10114 / PG1)).